A 228-amino-acid polypeptide reads, in one-letter code: 7-cyano-7-deazaguanine synthase (228 aa).

Leu-7–Leu-17 serves as a coordination point for ATP. The Zn(2+) site is built by Cys-190, Cys-202, Cys-205, and Cys-208.

Belongs to the QueC family. Zn(2+) is required as a cofactor.

The enzyme catalyses 7-carboxy-7-deazaguanine + NH4(+) + ATP = 7-cyano-7-deazaguanine + ADP + phosphate + H2O + H(+). It functions in the pathway purine metabolism; 7-cyano-7-deazaguanine biosynthesis. Its function is as follows. Catalyzes the ATP-dependent conversion of 7-carboxy-7-deazaguanine (CDG) to 7-cyano-7-deazaguanine (preQ(0)). The protein is 7-cyano-7-deazaguanine synthase of Acaryochloris marina (strain MBIC 11017).